Here is a 155-residue protein sequence, read N- to C-terminus: Xanthine-guanine phosphoribosyltransferase (155 aa).

5-phospho-alpha-D-ribose 1-diphosphate is bound by residues 37–38 (RG), Arg-69, and 90–98 (DDLVDTGGT). Position 69 (Arg-69) interacts with GMP. A Mg(2+)-binding site is contributed by Asp-91. Positions 94 and 137 each coordinate guanine. 2 residues coordinate xanthine: Asp-94 and Ile-137. Residues 94 to 98 (DTGGT) and 136 to 137 (WI) contribute to the GMP site.

The protein belongs to the purine/pyrimidine phosphoribosyltransferase family. XGPT subfamily. As to quaternary structure, homotetramer. The cofactor is Mg(2+).

Its subcellular location is the cell inner membrane. It carries out the reaction GMP + diphosphate = guanine + 5-phospho-alpha-D-ribose 1-diphosphate. The catalysed reaction is XMP + diphosphate = xanthine + 5-phospho-alpha-D-ribose 1-diphosphate. The enzyme catalyses IMP + diphosphate = hypoxanthine + 5-phospho-alpha-D-ribose 1-diphosphate. It functions in the pathway purine metabolism; GMP biosynthesis via salvage pathway; GMP from guanine: step 1/1. Its pathway is purine metabolism; XMP biosynthesis via salvage pathway; XMP from xanthine: step 1/1. Purine salvage pathway enzyme that catalyzes the transfer of the ribosyl-5-phosphate group from 5-phospho-alpha-D-ribose 1-diphosphate (PRPP) to the N9 position of the 6-oxopurines guanine and xanthine to form the corresponding ribonucleotides GMP (guanosine 5'-monophosphate) and XMP (xanthosine 5'-monophosphate), with the release of PPi. To a lesser extent, also acts on hypoxanthine. This is Xanthine-guanine phosphoribosyltransferase from Aeromonas salmonicida (strain A449).